The primary structure comprises 396 residues: Serine/threonine-protein kinase VRK1 (396 aa).

One can recognise a Protein kinase domain in the interval 37–317 (WKLGSPIGQG…LLDYVEKPLY (281 aa)). Residues 43–51 (IGQGGFGCI) and lysine 71 contribute to the ATP site. A Glycyl lysine isopeptide (Lys-Gly) (interchain with G-Cter in SUMO2) cross-link involves residue lysine 71. The Proton acceptor role is filled by aspartate 177. A disordered region spans residues 352-396 (KPVAKKRKKEAEESVESSVEDMECSDKQTEEATQTRSKTRKRVQK). Residues 364 to 374 (ESVESSVEDME) are compositionally biased toward acidic residues. Serine 376 carries the post-translational modification Phosphoserine. Positions 387-393 (RSKTRKR) are required for interaction with the nucleosome.

It belongs to the protein kinase superfamily. CK1 Ser/Thr protein kinase family. VRK subfamily. In terms of assembly, interacts with HDAC1, KAT2B, SETDB1, KDM3A and KDM4A. Associates with the nucleosome through interactions with nucleosome DNA, histone H2A and histone H2B; the interaction with H2A and H2B is mediated by the nucleosome acidic patch, a cluster of negatively charged residues of H2A and H2B forming a cleft within the nucleosome core. In terms of processing, autophosphorylated at various serine and threonine residues. Autophosphorylation does not impair its ability to phosphorylate p53/TP53. Phosphorylation by PLK3 leads to induction of Golgi fragmentation during mitosis.

It localises to the nucleus. Its subcellular location is the cytoplasm. The protein resides in the cajal body. It carries out the reaction L-seryl-[protein] + ATP = O-phospho-L-seryl-[protein] + ADP + H(+). The enzyme catalyses L-threonyl-[protein] + ATP = O-phospho-L-threonyl-[protein] + ADP + H(+). Its activity is regulated as follows. Active in presence of Mn(2+), Mg(2+) and Zn(2+), but is not functional with Ca(2+) or Cu(2+). Has a higher affinity for Mn(2+) than for Mg(2+). RAN inhibits its autophosphorylation and its ability to phosphorylate histone H3. Functionally, serine/threonine kinase involved in the regulation of key cellular processes including the cell cycle, nuclear condensation, transcription regulation, and DNA damage response. Controls chromatin organization and remodeling by mediating phosphorylation of histone H3 on 'Thr-4' and histone H2AX (H2aXT4ph). It also phosphorylates KAT5 in response to DNA damage, promoting KAT5 association with chromatin and histone acetyltransferase activity. Is involved in the regulation of cell cycle progression of neural progenitors, and is required for proper cortical neuronal migration. Is involved in neurite elongation and branching in motor neurons, and has an essential role in Cajal bodies assembly, acting through COIL phosphorylation and the control of coilin degradation. Involved in Golgi disassembly during the cell cycle: following phosphorylation by PLK3 during mitosis, it is required to induce Golgi fragmentation. Phosphorylates BANF1: disrupts its ability to bind DNA, reduces its binding to LEM domain-containing proteins and causes its relocalization from the nucleus to the cytoplasm. Phosphorylates TP53BP1 and p53/TP53 on 'Thr-18', preventing the interaction between p53/TP53 and MDM2. Phosphorylates ATF2 which activates its transcriptional activity. Phosphorylates JUN. The chain is Serine/threonine-protein kinase VRK1 (VRK1) from Bos taurus (Bovine).